A 148-amino-acid chain; its full sequence is Protein Turandot Z (148 aa).

A signal peptide spans 1 to 23 (MYFAIRLSFVLAVLFCLTGNGSA).

This sequence belongs to the Turandot family.

The protein localises to the secreted. A humoral factor that may play a role in stress tolerance. This Drosophila simulans (Fruit fly) protein is Protein Turandot Z.